The following is a 688-amino-acid chain: DNA-directed RNA polymerase subunit beta' (688 aa).

Zn(2+) is bound by residues Cys69, Cys71, Cys87, and Cys90. Residues Asp493, Asp495, and Asp497 each contribute to the Mg(2+) site.

The protein belongs to the RNA polymerase beta' chain family. RpoC1 subfamily. In terms of assembly, in plastids the minimal PEP RNA polymerase catalytic core is composed of four subunits: alpha, beta, beta', and beta''. When a (nuclear-encoded) sigma factor is associated with the core the holoenzyme is formed, which can initiate transcription. Mg(2+) is required as a cofactor. Requires Zn(2+) as cofactor.

Its subcellular location is the plastid. It localises to the chloroplast. The enzyme catalyses RNA(n) + a ribonucleoside 5'-triphosphate = RNA(n+1) + diphosphate. Functionally, DNA-dependent RNA polymerase catalyzes the transcription of DNA into RNA using the four ribonucleoside triphosphates as substrates. This chain is DNA-directed RNA polymerase subunit beta', found in Chloranthus spicatus (Chulantree).